The chain runs to 161 residues: Nucleotide-binding protein Veis_3464 (161 aa).

The protein belongs to the YajQ family.

Nucleotide-binding protein. This chain is Nucleotide-binding protein Veis_3464, found in Verminephrobacter eiseniae (strain EF01-2).